A 34-amino-acid polypeptide reads, in one-letter code: Aspartate aminotransferase 2 (34 aa).

It belongs to the class-I pyridoxal-phosphate-dependent aminotransferase family. In terms of assembly, homodimer. Pyridoxal 5'-phosphate is required as a cofactor.

It catalyses the reaction L-aspartate + 2-oxoglutarate = oxaloacetate + L-glutamate. Important for the metabolism of amino acids and Krebs-cycle related organic acids. In plants, it is involved in nitrogen metabolism and in aspects of carbon and energy metabolism. The protein is Aspartate aminotransferase 2 of Pseudotsuga menziesii (Douglas-fir).